Here is a 453-residue protein sequence, read N- to C-terminus: Cysteine desulfurase, mitochondrial (453 aa).

Residues 1–34 constitute a mitochondrion transit peptide; sequence MASKVISATIRRTLTKPHGTFSRCRYLSTAAAAT. Residues 123-124, Asn-203, Gln-231, and 251-253 each bind pyridoxal 5'-phosphate; these read AT and SAH. N6-(pyridoxal phosphate)lysine is present on Lys-254. Residue Thr-291 participates in pyridoxal 5'-phosphate binding. Catalysis depends on Cys-377, which acts as the Cysteine persulfide intermediate. Cys-377 contacts [2Fe-2S] cluster.

The protein belongs to the class-V pyridoxal-phosphate-dependent aminotransferase family. NifS/IscS subfamily. Interacts with FH. Interacts with SUFE1. The cofactor is pyridoxal 5'-phosphate.

Its subcellular location is the mitochondrion. It carries out the reaction (sulfur carrier)-H + L-cysteine = (sulfur carrier)-SH + L-alanine. Its activity is regulated as follows. Threefold increase in the catalytic activity in the presence of FH (frataxin). 30-fold increase in the catalytic activity in the presence of SUFE1. Its function is as follows. Catalyzes the removal of elemental sulfur from cysteine to produce alanine. Supplies the inorganic sulfur for iron-sulfur (Fe-S) clusters. This chain is Cysteine desulfurase, mitochondrial, found in Arabidopsis thaliana (Mouse-ear cress).